A 191-amino-acid chain; its full sequence is Large ribosomal subunit protein uL5 (191 aa).

It belongs to the universal ribosomal protein uL5 family. As to quaternary structure, part of the 50S ribosomal subunit; part of the 5S rRNA/L5/L18/L25 subcomplex. Contacts the 5S rRNA and the P site tRNA. Forms a bridge to the 30S subunit in the 70S ribosome.

In terms of biological role, this is one of the proteins that bind and probably mediate the attachment of the 5S RNA into the large ribosomal subunit, where it forms part of the central protuberance. In the 70S ribosome it contacts protein S13 of the 30S subunit (bridge B1b), connecting the 2 subunits; this bridge is implicated in subunit movement. Contacts the P site tRNA; the 5S rRNA and some of its associated proteins might help stabilize positioning of ribosome-bound tRNAs. The protein is Large ribosomal subunit protein uL5 of Thermobifida fusca (strain YX).